The chain runs to 294 residues: Protein C3orf33 (294 aa).

An N-acetylalanine modification is found at alanine 2. A helical transmembrane segment spans residues 40 to 56; that stretch reads ISTGMAIAGIMLLLRSI.

As to expression, highly expressed in ileocecal tissue and endometrium.

It localises to the membrane. It is found in the secreted. In terms of biological role, secreted protein may play a role in transcription regulation via the MAPK3/MAPK1 pathway through an unidentified receptor on the plasma membrane. The protein is Protein C3orf33 (C3orf33) of Homo sapiens (Human).